Reading from the N-terminus, the 467-residue chain is MQMDNRLPPKKVPGFCSFRYGLSFLVHCCNVIITAQRACLNLTMVVMVNSTDPHGLPNTSTKKLLDNIKNPMYNWSPDIQGIILSSTSYGVIIIQVPVGYFSGIYSTKKMIGFALCLSSVLSLLIPPAAGIGVAWVVVCRAVQGAAQGIVATAQFEIYVKWAPPLERGRLTSMSTSGFLLGPFIVLLVTGVICESLGWPMVFYIFGACGCAVCLLWFVLFYDDPKDHPCISISEKEYITSSLVQQVSSSRQSLPIKAILKSLPVWAISTGSFTFFWSHNIMTLYTPMFINSMLHVNIKENGFLSSLPYLFAWICGNLAGQLSDFFLTRNILSVIAVRKLFTAAGFLLPAIFGVCLPYLSSTFYSIVIFLILAGATGSFCLGGVFINGLDIAPRYFGFIKACSTLTGMIGGLIASTLTGLILKQDPESAWFKTFILMAAINVTGLIFYLIVATAEIQDWAKEKQHTRL.

Asn-41, Asn-49, and Asn-58 each carry an N-linked (GlcNAc...) asparagine glycan. Helical transmembrane passes span 81–101, 119–139, 178–198, 200–220, 257–277, 301–321, 339–359, 365–385, 401–421, and 433–453; these read GIILSSTSYGVIIIQVPVGYF, SVLSLLIPPAAGIGVAWVVVC, FLLGPFIVLLVTGVICESLGW, MVFYIFGACGCAVCLLWFVLF, AILKSLPVWAISTGSFTFFWS, GFLSSLPYLFAWICGNLAGQL, LFTAAGFLLPAIFGVCLPYLS, IVIFLILAGATGSFCLGGVFI, CSTLTGMIGGLIASTLTGLIL, and FILMAAINVTGLIFYLIVATA.

The protein belongs to the major facilitator superfamily. Sodium/anion cotransporter family. As to quaternary structure, interacts with PDZK1. Expressed in kidney cortex, liver and brain but not in other tissues.

The protein resides in the apical cell membrane. It catalyses the reaction 3 Na(+)(out) + phosphate(out) = 3 Na(+)(in) + phosphate(in). It carries out the reaction urate(out) = urate(in). Functionally, important for the resorption of phosphate by the kidney. May be involved in actively transporting phosphate into cells via Na(+) cotransport in the renal brush border membrane. Plays a role in urate transport in the kidney. The chain is Sodium-dependent phosphate transport protein 1 (SLC17A1) from Homo sapiens (Human).